The sequence spans 306 residues: Putative S-adenosyl-L-methionine-dependent methyltransferase Mvan_1345 (306 aa).

Residues Asp-134 and 163 to 164 (DL) each bind S-adenosyl-L-methionine.

The protein belongs to the UPF0677 family.

Exhibits S-adenosyl-L-methionine-dependent methyltransferase activity. The polypeptide is Putative S-adenosyl-L-methionine-dependent methyltransferase Mvan_1345 (Mycolicibacterium vanbaalenii (strain DSM 7251 / JCM 13017 / BCRC 16820 / KCTC 9966 / NRRL B-24157 / PYR-1) (Mycobacterium vanbaalenii)).